Here is a 675-residue protein sequence, read N- to C-terminus: UvrABC system protein B (675 aa).

In terms of domain architecture, Helicase ATP-binding spans 35-422; that stretch reads EGVSDGLMFQ…ADNVVEQVVR (388 aa). 48–55 provides a ligand contact to ATP; the sequence is GVTGSGKT. A Beta-hairpin motif is present at residues 101 to 124; it reads YYDYYQPEAYVPTRDLFIEKDSSI. The Helicase C-terminal domain maps to 439 to 605; that stretch reads QVDDLLGEIH…GVSKAVRELI (167 aa). The 36-residue stretch at 633 to 668 folds into the UVR domain; that stretch reads AREIRRLEKLMMDHARNLEFEQAAAARDALNALKSR.

Belongs to the UvrB family. In terms of assembly, forms a heterotetramer with UvrA during the search for lesions. Interacts with UvrC in an incision complex.

Its subcellular location is the cytoplasm. In terms of biological role, the UvrABC repair system catalyzes the recognition and processing of DNA lesions. A damage recognition complex composed of 2 UvrA and 2 UvrB subunits scans DNA for abnormalities. Upon binding of the UvrA(2)B(2) complex to a putative damaged site, the DNA wraps around one UvrB monomer. DNA wrap is dependent on ATP binding by UvrB and probably causes local melting of the DNA helix, facilitating insertion of UvrB beta-hairpin between the DNA strands. Then UvrB probes one DNA strand for the presence of a lesion. If a lesion is found the UvrA subunits dissociate and the UvrB-DNA preincision complex is formed. This complex is subsequently bound by UvrC and the second UvrB is released. If no lesion is found, the DNA wraps around the other UvrB subunit that will check the other stand for damage. This chain is UvrABC system protein B, found in Bordetella bronchiseptica (strain ATCC BAA-588 / NCTC 13252 / RB50) (Alcaligenes bronchisepticus).